An 85-amino-acid chain; its full sequence is Large ribosomal subunit protein bL27 (85 aa).

The interval 1–22 (MAHKKAGGSTRNGRDSESKRLG) is disordered.

The protein belongs to the bacterial ribosomal protein bL27 family.

This Vibrio parahaemolyticus serotype O3:K6 (strain RIMD 2210633) protein is Large ribosomal subunit protein bL27.